The chain runs to 337 residues: F420-dependent glucose-6-phosphate dehydrogenase (337 aa).

Position 44 (aspartate 44) interacts with coenzyme F420-(gamma-Glu)n. Catalysis depends on histidine 45, which acts as the Proton donor. Coenzyme F420-(gamma-Glu)n contacts are provided by residues threonine 81 and 112–113 (TG). Glutamate 114 functions as the Proton acceptor in the catalytic mechanism. Residues asparagine 117, 180–181 (GG), and 183–184 (GV) contribute to the coenzyme F420-(gamma-Glu)n site. Residues threonine 198, lysine 201, lysine 262, and arginine 286 each contribute to the substrate site.

This sequence belongs to the F420-dependent glucose-6-phosphate dehydrogenase family. Homodimer.

The catalysed reaction is oxidized coenzyme F420-(gamma-L-Glu)(n) + D-glucose 6-phosphate + H(+) = 6-phospho-D-glucono-1,5-lactone + reduced coenzyme F420-(gamma-L-Glu)(n). Catalyzes the coenzyme F420-dependent oxidation of glucose 6-phosphate (G6P) to 6-phosphogluconolactone. This Kineococcus radiotolerans (strain ATCC BAA-149 / DSM 14245 / SRS30216) protein is F420-dependent glucose-6-phosphate dehydrogenase.